We begin with the raw amino-acid sequence, 292 residues long: ATP synthase gamma chain (292 aa).

Belongs to the ATPase gamma chain family. F-type ATPases have 2 components, CF(1) - the catalytic core - and CF(0) - the membrane proton channel. CF(1) has five subunits: alpha(3), beta(3), gamma(1), delta(1), epsilon(1). CF(0) has three main subunits: a, b and c.

It localises to the cell membrane. Functionally, produces ATP from ADP in the presence of a proton gradient across the membrane. The gamma chain is believed to be important in regulating ATPase activity and the flow of protons through the CF(0) complex. This Caldicellulosiruptor saccharolyticus (strain ATCC 43494 / DSM 8903 / Tp8T 6331) protein is ATP synthase gamma chain.